A 1003-amino-acid polypeptide reads, in one-letter code: Cation-transporting ATPase HMA5 (1003 aa).

Residues 6–25 (LSAVAGGGRPAAAGGGGDEM) are disordered. Over residues 10-22 (AGGGRPAAAGGGG) the composition is skewed to gly residues. 3 HMA domains span residues 51-117 (EEAH…FDAE), 133-199 (LSAQ…FEAA), and 207-273 (DKIL…NGRL). C62, C65, C144, and C147 together coordinate Cu cation. The next 8 helical transmembrane spans lie at 302–322 (SLFL…IPFI), 331–351 (GPFH…QFVV), 372–392 (VLVV…LLYG), 396–416 (GFHP…VLFG), 562–582 (IFVP…FLCG), 599–619 (FVFS…CALG), 938–958 (FFAM…LFPF), and 966–986 (WLAG…SLLL).

It belongs to the cation transport ATPase (P-type) (TC 3.A.3) family. Type IB subfamily. As to expression, expressed in root vascular cylinder, vascular bundles and mesophyll cells of leaf blades, and anther walls and microspores of stamens.

It is found in the cell membrane. Metal efflux transporter that may play a role in detoxification of heavy metals, such as zinc, copper, lead and cadmium, especially in the shoots. The protein is Cation-transporting ATPase HMA5 of Oryza sativa subsp. japonica (Rice).